Consider the following 1209-residue polypeptide: Putative lysine-specific demethylase JMJ16 (1209 aa).

The region spanning 146 to 187 is the JmjN domain; it reads APVFYPSEEEFEDTLNYIAKIRPEAEKYGICRIVPPPSWKPP. A Nuclear localization signal motif is present at residues 217–224; that stretch reads MKKISKLP. The 167-residue stretch at 361–527 folds into the JmjC domain; that stretch reads KYAKSGWNLN…HGQIAIELYC (167 aa). The Fe cation site is built by His407, Glu409, and His495. Zn(2+) is bound by residues Cys617, Cys620, Cys631, Cys633, Cys640, His643, Cys648, and Cys650. The segment at 617–667 adopts a C5HC2 zinc-finger fold; that stretch reads CCICFFDLHLSAAGCRCSPEKYSCLTHVKELCSCPWVTKYFLFRYDIDELN. Positions 872 to 900 are disordered; sequence DTRNTISLPTNDQKTMRRDVPSSTSHAEV. Polar residues predominate over residues 875–884; it reads NTISLPTNDQ. Positions 974–1032 constitute an FYR N-terminal domain; sequence VVRRINCNVEPLSYGCVLSGKSWCSRRAIFPKGFRSRVKYINILDPTNMCFYISEILDA. The region spanning 1034-1124 is the FYR C-terminal domain; sequence RNSPLFMVYL…RVCTDYWDSR (91 aa).

Belongs to the JARID1 histone demethylase family. Interacts with MMD1 in the nucleus of male meiocytes, especially on pachytene chromosomes. Fe(2+) serves as cofactor. As to expression, confined to inflorescences.

The protein localises to the nucleus. The enzyme catalyses N(6),N(6),N(6)-trimethyl-L-lysyl(4)-[histone H3] + 2-oxoglutarate + O2 = N(6),N(6)-dimethyl-L-lysyl(4)-[histone H3] + formaldehyde + succinate + CO2. It carries out the reaction N(6),N(6)-dimethyl-L-lysyl(4)-[histone H3] + 2-oxoglutarate + O2 = N(6)-methyl-L-lysyl(4)-[histone H3] + formaldehyde + succinate + CO2. The catalysed reaction is N(6)-methyl-L-lysyl(4)-[histone H3] + 2-oxoglutarate + O2 = L-lysyl(4)-[histone H3] + formaldehyde + succinate + CO2. Its function is as follows. Functions as a histone H3 'Lys-4' (H3K4me) demethylase involved in the negative regulation of gene expression. Active on H3K4me1, H3K4me2 and H3K4me3. Not active on mono-, di- and trimethylated H3K9, H3K27 and H3K36 in somatic cells. However, also active on H3K9 when in complex with MMD1, a meiocyte-specific histone reader. Together with MMD1, promotes gene expression in male meiocytes in an H3K9me3-dependent manner, and contributes to meiotic chromosome condensation by triggering some condensin promoters (e.g. CAP-D3 and CAP-H). Together with JMJ14 and JMJ17, required for plant growth and development. Represses leaf senescence in an age-dependent manner by demethylating H3K4me3 activating histone marks at senescence-associated genes (SAGs) loci, including WRKY53 and SAG201, thus preventing their premature expression. The protein is Putative lysine-specific demethylase JMJ16 of Arabidopsis thaliana (Mouse-ear cress).